Here is a 298-residue protein sequence, read N- to C-terminus: Acetylglutamate kinase (298 aa).

Residues 69–70 (GG), arginine 91, and asparagine 196 each bind substrate.

This sequence belongs to the acetylglutamate kinase family. ArgB subfamily.

Its subcellular location is the cytoplasm. It catalyses the reaction N-acetyl-L-glutamate + ATP = N-acetyl-L-glutamyl 5-phosphate + ADP. It participates in amino-acid biosynthesis; L-arginine biosynthesis; N(2)-acetyl-L-ornithine from L-glutamate: step 2/4. Catalyzes the ATP-dependent phosphorylation of N-acetyl-L-glutamate. The polypeptide is Acetylglutamate kinase (Bradyrhizobium sp. (strain ORS 278)).